Consider the following 373-residue polypeptide: Dof zinc finger protein 3 (373 aa).

The interval 1 to 23 (MASGGALSPVEEKPTVVKTTKAE) is disordered. A compositionally biased stretch (basic and acidic residues) spans 10-23 (VEEKPTVVKTTKAE). A Dof-type zinc finger spans residues 45–99 (PCCPRCNSIKTKFCYYNNYSMAQPRYFCRECRRYWTQGGSLRNVPVGGGCRKSKR). Zn(2+)-binding residues include cysteine 47, cysteine 50, cysteine 72, and cysteine 75. Positions 297 to 327 (ALGGADEQQGGGDGGEAVMTKDTGGGASSSA) are disordered.

As to quaternary structure, interacts with RISBZ1/BZIP58.

Its subcellular location is the nucleus. In terms of biological role, transcriptional activator that binds specifically to the DNA consensus core sequence 5'-AAAG-3' also known as prolamin box. Can activate the expression of genes encoding for the seed storage proteins glutelin, prolamin and globulin. Functions synergistically with RISBZ/BZIP58 to positively regulate quantitatively many seed storage proteins. Functions synergistically with RISBZ1/BZIP58 to positively regulate some metabolic enzymes, such as alanine aminotransferase and pyruvate phosphate dikinase, that are expressed in developing seeds. Functions synergistically with RISBZ1/BZIP58 to positively regulate genes that are key players in the development of aleurone layers. Functions synergistically with RISBZ1/BZIP58 to positively regulate the glutelin GLUD-1 gene in endosperm of developing seeds. Can activate the expression of the bifunctional lysine-degrading enzyme, lysine ketoglutarate reductase/saccharopine dehydrogenase (LKR/SDH), one of the key regulators determining free lysine content in plants. In germinating seeds, involved in the gibberellin-mediated activation of the alpha-amylase AMY1.1/AMY1A gene. This chain is Dof zinc finger protein 3, found in Oryza sativa subsp. japonica (Rice).